The primary structure comprises 283 residues: Bis(5'-nucleosyl)-tetraphosphatase, symmetrical (283 aa).

Belongs to the Ap4A hydrolase family.

The enzyme catalyses P(1),P(4)-bis(5'-adenosyl) tetraphosphate + H2O = 2 ADP + 2 H(+). Functionally, hydrolyzes diadenosine 5',5'''-P1,P4-tetraphosphate to yield ADP. This is Bis(5'-nucleosyl)-tetraphosphatase, symmetrical from Pseudomonas fluorescens (strain SBW25).